The following is a 452-amino-acid chain: MGRYFGTDGIRGEANRELTVDKALRLGYALGYYLKNNNPNEEKIKVIMGSDTRISGYMLRSALTAGLTSMGIYIDFVGVIPTPGVAYITKQKKAKAGIMISASHNPAKDNGIKIFNLEGYKLSDEIENQIEDYMDNLDKILANPLAGDKVGKFKYAEDEYFQYKNYLTQCVKGNFKDIKIVLDTANGAAYRAAKDVFLDLRAELVVINDAPNGRNINVKCGSTHPDILSKVVVGYEADLGLAYDGDADRLIAVDKFGNVIDGDKIIGILALGMKNKGTLKNNKVVTTVMSNIGFEKYLKENSIELLRANVGDRYVLEKMLAEDVVIGGEQSGHIILKDYATTGDGVLSSLKLVEVIRDTGKDLHELVSSIKDAPQTLINVKVDNIKKNTWDKNEIIMSFINEANKKYKDEVRILVRKSGTEPLIRVMTEGDDKQLVHKLAEDIAHLIEKELN.

The Phosphoserine intermediate role is filled by Ser-103. Mg(2+) is bound by residues Ser-103, Asp-244, Asp-246, and Asp-248. Ser-103 carries the phosphoserine modification.

This sequence belongs to the phosphohexose mutase family. It depends on Mg(2+) as a cofactor. Activated by phosphorylation.

It carries out the reaction alpha-D-glucosamine 1-phosphate = D-glucosamine 6-phosphate. Functionally, catalyzes the conversion of glucosamine-6-phosphate to glucosamine-1-phosphate. In Fusobacterium nucleatum subsp. nucleatum (strain ATCC 25586 / DSM 15643 / BCRC 10681 / CIP 101130 / JCM 8532 / KCTC 2640 / LMG 13131 / VPI 4355), this protein is Phosphoglucosamine mutase.